The following is a 374-amino-acid chain: UPF0496 protein At3g28270 (374 aa).

Positions 171 to 210 form a coiled coil; sequence KVLTTQFERIKKQQESLLEEVSETRKKIQDEISNLEKKTL. The next 2 membrane-spanning stretches (helical) occupy residues 214-234 and 235-255; these read VVFG…IATG and VGAA…GWAG. The stretch at 256–321 forms a coiled coil; that stretch reads VYTTLDKKKD…MLKLVDNAID (66 aa).

It belongs to the UPF0496 family.

Its subcellular location is the membrane. This Arabidopsis thaliana (Mouse-ear cress) protein is UPF0496 protein At3g28270.